A 484-amino-acid polypeptide reads, in one-letter code: HTH-type transcriptional regulator TauR (484 aa).

Residues 16–84 (GSLQHRLRQM…GRSGTFVSAA (69 aa)) enclose the HTH gntR-type domain. Residues 44–63 (TRALAAHLGVARITVTLAYA) constitute a DNA-binding region (H-T-H motif). Lysine 330 carries the post-translational modification N6-(pyridoxal phosphate)lysine.

In the C-terminal section; belongs to the class-I pyridoxal-phosphate-dependent aminotransferase family. Pyridoxal 5'-phosphate serves as cofactor.

Its function is as follows. Transcriptional activator, which is essential for taurine-dependent expression of the tpa-tauR-xsc operon. Acts by binding to direct repeats in the promoter region. This is HTH-type transcriptional regulator TauR from Rhodobacter capsulatus (strain ATCC BAA-309 / NBRC 16581 / SB1003).